We begin with the raw amino-acid sequence, 1342 residues long: MVYSYTEKKRIRKDFGKRPQVLDVPYLLSIQLDSFQKFIEQDPEGQYGLEAAFRSVFPIQSYSGNSELQYVSYRLGEPVFDVQECQIRGVTYSAPLRVKLRLVIYEREAPEGTVKDIKEQEVYMGEIPLMTDNGTFVINGTERVIVSQLHRSPGVFFDSDKGKTHSSGKVLYNARIIPYRGSWLDFEFDPKDNLFVRIDRRRKLPATIILRALNYTTEQILDLFFEKVIFEIRDNKLQMELVPERLRGETASFDIEANGKVYVEKGRRITARHIRQLEKDDVKLIEVPVEYIAGKVVAKDYIDESTGELICAANMELSLELLAKLSQSGHKRIETLFTNDLDHGPYISETLRVDPTNDRLSALVEIYRMMRPGEPPTREAAESLFENLFFSEDRYDLSAVGRMKFNRSLLREEIEGSGILSKDDIIDVMKKLIDIRNGKGEVDDIDHLGNRRIRSVGEMAENQFRVGLVRVERAVKERLSLGDLDTLMPQDMINAKPISAAVKEFFGSSQLSQFMDQNNPLSEITHKRRISALGPGGLTRERAGFEVRDVHPTHYGRVCPIETPEGPNIGLINSLSVYAQTNEYGFLETPYRKVTDGVVTDEIHYLSAIEEGNYVIAQANSNLDEEGHFVEDLVTCRSKGESSLFSRDQVDYMDVSTQQVVSVGASLIPFLEHDDANRALMGANMQRQAVPTLRADKPLVGTGMERAVAVDSGVTAVAKRGGVVQYVDASRIVIKVNEDEMYPGEAGIDIYNLTKYTRSNQNTCINQMPCVSLGEPVERGDVLADGPSTDLGELALGQNMRVAFMPWNGYNFEDSILVSERVVQEDRFTTIHIQELACVSRDTKLGPEEITADIPNVGEAALSKLDESGIVYIGAEVTGGDILVGKVTPKGETQLTPEEKLLRAIFGEKASDVKDSSLRVPNGVSGTVIDVQVFTRDGVEKDKRALEIEEMQLKQAKKDLSEELQILEAGLFSRIRAVLVAGGVEAEKLDKLPRDRWLELGLTDEEKQNQLEQLAEQYDELKHEFEKKLEAKRRKITQGDDLAPGVLKIVKVYLAVKRRIQPGDKMAGRHGNKGVISKINPIEDMPYDENGTPVDIVLNPLGVPSRMNIGQILETHLGMAAKGIGDKINAMLKQQQEVAKLREFIQRAYDLGADVRQKVDLSTFSDEEVMRLAENLRKGMPIATPVFDGAKEAEIKELLKLGDLPTSGQIRLYDGRTGEQFERPVTVGYMYMLKLNHLVDDKMHARSTGSYSLVTQQPLGGKAQFGGQRFGEMEVWALEAYGAAYTLQEMLTVKSDDVNGRTKMYKNIVDGNHQMEPGMPESFNVLLKEIRSLGINIELEDE.

Residues Lys-1022 and Lys-1200 each carry the N6-acetyllysine modification.

The protein belongs to the RNA polymerase beta chain family. In terms of assembly, the RNAP catalytic core consists of 2 alpha, 1 beta, 1 beta' and 1 omega subunit. When a sigma factor is associated with the core the holoenzyme is formed, which can initiate transcription.

The catalysed reaction is RNA(n) + a ribonucleoside 5'-triphosphate = RNA(n+1) + diphosphate. Its function is as follows. DNA-dependent RNA polymerase catalyzes the transcription of DNA into RNA using the four ribonucleoside triphosphates as substrates. The protein is DNA-directed RNA polymerase subunit beta of Shigella dysenteriae serotype 1 (strain Sd197).